The sequence spans 1064 residues: Adenylate cyclase type 4 (1064 aa).

Residues 1 to 28 (MARLFSPRPPPSEDLFYETYYSLSQQYP) are Cytoplasmic-facing. 6 consecutive transmembrane segments (helical) span residues 29 to 50 (LLIL…VAWA), 61 to 80 (FLTT…GLAS), 94 to 117 (GLIW…VSAW), 120 to 138 (VSFF…PLGM), 141 to 162 (AAAA…YLGW), and 170 to 190 (LLPQ…VGAY). At 191–582 (HKALMERALR…YRLSALPAFK (392 aa)) the chain is on the cytoplasmic side. Residues Asp278, Ile279, and Asp322 each contribute to the Mg(2+) site. Residues 278–283 (DIVGFT), 320–322 (LGD), and Arg366 each bind ATP. A disordered region spans residues 498-523 (DSPASTSTPLPEKAFSPQWSLDRSRT). Position 517 is a phosphoserine (Ser517). Thr533 is subject to Phosphothreonine. 3 helical membrane-spanning segments follow: residues 583–604 (YYAA…LVTT), 608–630 (ALAT…CFSE), and 661–684 (VALG…FLPV). Residues 685–707 (SSDCPFLAPNVSSVAFNTSWELP) lie on the Extracellular side of the membrane. N-linked (GlcNAc...) asparagine glycosylation is found at Asn694 and Asn701. A run of 3 helical transmembrane segments spans residues 708-733 (ASLP…SLFL), 741-761 (LLLL…SHAW), and 788-804 (MGAI…LVLA). Over 805-1064 (RQNEYYCRLD…LTRTGSPSAS (260 aa)) the chain is Cytoplasmic. ATP is bound by residues Lys914, 994–996 (DIW), 1001–1005 (NVASR), and Lys1041.

Belongs to the adenylyl cyclase class-4/guanylyl cyclase family. Mg(2+) is required as a cofactor. Requires Mn(2+) as cofactor. Widely distributed.

It is found in the cell membrane. The protein localises to the cytoplasm. The catalysed reaction is ATP = 3',5'-cyclic AMP + diphosphate. With respect to regulation, activated by forskolin. Insensitive to calcium/calmodulin. Stimulated by GNAS and by the G-protein beta and gamma subunit complex. Catalyzes the formation of the signaling molecule cAMP in response to G-protein signaling. In Rattus norvegicus (Rat), this protein is Adenylate cyclase type 4 (Adcy4).